Reading from the N-terminus, the 149-residue chain is 3-dehydroquinate dehydratase (149 aa).

Catalysis depends on Y26, which acts as the Proton acceptor. The substrate site is built by N77, H83, and D90. H103 functions as the Proton donor in the catalytic mechanism. Substrate is bound by residues 104–105 (LS) and R114.

It belongs to the type-II 3-dehydroquinase family. As to quaternary structure, homododecamer.

The enzyme catalyses 3-dehydroquinate = 3-dehydroshikimate + H2O. It participates in metabolic intermediate biosynthesis; chorismate biosynthesis; chorismate from D-erythrose 4-phosphate and phosphoenolpyruvate: step 3/7. In terms of biological role, catalyzes a trans-dehydration via an enolate intermediate. The polypeptide is 3-dehydroquinate dehydratase (Edwardsiella ictaluri (strain 93-146)).